Here is a 1993-residue protein sequence, read N- to C-terminus: [F-actin]-monooxygenase MICAL3 (1993 aa).

Positions E2–K494 are monooxygenase domain. Residues C97, E116 to R118, R123 to N125, F183, Y298, and D398 contribute to the FAD site. The Calponin-homology (CH) domain occupies V518–K624. S649 is modified (phosphoserine). A disordered region spans residues G658–V704. A compositionally biased stretch (basic and acidic residues) spans D669–G679. Phosphoserine occurs at positions 685 and 687. In terms of domain architecture, LIM zinc-binding spans D762–G824. Zn(2+) contacts are provided by C764, C767, H785, C788, C791, C794, C814, and H817. Positions N854–G886 are disordered. Residues A860–N873 show a composition bias toward polar residues. Position 887 is a phosphothreonine (T887). Disordered regions lie at residues E905–Q1023, W1039–P1309, I1332–P1546, and K1559–K1837. A compositionally biased stretch (acidic residues) spans S938 to D951. Over residues G975–E988 the composition is skewed to basic and acidic residues. S977 carries the post-translational modification Phosphoserine. The span at P989–S1014 shows a compositional bias: acidic residues. A compositionally biased stretch (basic and acidic residues) spans W1039 to M1051. Residues D1065 to P1090 are compositionally biased toward acidic residues. Residues E1111–G1148 are compositionally biased toward basic and acidic residues. Phosphoserine is present on residues S1131 and S1187. Residues L1199–K1212 are compositionally biased toward basic and acidic residues. Positions S1230 to P1239 are enriched in polar residues. A compositionally biased stretch (pro residues) spans P1245–Q1255. The segment covering P1257–K1275 has biased composition (polar residues). The residue at position 1272 (S1272) is a Phosphoserine. T1274 carries the phosphothreonine modification. 2 positions are modified to phosphoserine: S1276 and S1335. A Phosphothreonine modification is found at T1339. Phosphoserine occurs at positions 1369 and 1382. The span at P1405 to L1420 shows a compositional bias: basic and acidic residues. Low complexity predominate over residues S1421–S1433. Position 1431 is a phosphoserine (S1431). Over residues N1434–T1452 the composition is skewed to polar residues. T1452 is modified (phosphothreonine). Residues P1454–E1465 are compositionally biased toward pro residues. Positions S1516 to Y1530 are enriched in acidic residues. The span at E1584–V1600 shows a compositional bias: basic and acidic residues. Positions S1623–G1633 are enriched in polar residues. The residue at position 1640 (S1640) is a Phosphoserine. Residues S1665–G1685 are compositionally biased toward low complexity. Residues K1686–K1704 are compositionally biased toward basic residues. S1692 and S1695 each carry phosphoserine. Over residues T1754–S1763 the composition is skewed to polar residues. A compositionally biased stretch (basic and acidic residues) spans I1795 to T1811. Residues A1817–M1983 adopt a coiled-coil conformation. Basic residues predominate over residues L1819–Q1830. Positions K1832–A1981 constitute a bMERB domain. Residue S1903 is modified to Phosphoserine.

The protein belongs to the Mical family. Interacts with RAB1B, RAB8A, RAB10, RAB13 and RAB15 (in their GTP-bound forms); binding to RAB1B is of low affinity compared to other Rab proteins; at least in case of RAB8A can bind 2 molecules of RAB8A simultaneously through a high and a low affinity binding site, respectively. Interacts with ERC1 and RAB8A; may bridge ERC1 with RAB8A. Interacts with KIF23 and ERC1; enhances the interaction between KIF23 and ERC1. Interacts with NINL. The cofactor is FAD.

It localises to the cytoplasm. The protein localises to the cell cortex. The protein resides in the cytoskeleton. Its subcellular location is the nucleus. It is found in the midbody. It localises to the spindle. The protein localises to the cilium basal body. It catalyses the reaction L-methionyl-[F-actin] + NADPH + O2 + H(+) = L-methionyl-(R)-S-oxide-[F-actin] + NADP(+) + H2O. Functionally, monooxygenase that promotes depolymerization of F-actin by mediating oxidation of specific methionine residues on actin to form methionine-sulfoxide, resulting in actin filament disassembly and preventing repolymerization. In the absence of actin, it also functions as a NADPH oxidase producing H(2)O(2). Seems to act as Rab effector protein and play a role in vesicle trafficking. Involved in exocytic vesicles tethering and fusion: the monooxygenase activity is required for this process and implicates RAB8A associated with exocytotic vesicles. Required for cytokinesis. Contributes to stabilization and/or maturation of the intercellular bridge independently of its monooxygenase activity. Promotes recruitment of Rab8 and ERC1 to the intercellular bridge, and together these proteins are proposed to function in timely abscission. This Mus musculus (Mouse) protein is [F-actin]-monooxygenase MICAL3 (Mical3).